Consider the following 273-residue polypeptide: Large ribosomal subunit protein uL2 (273 aa).

Residues 213-261 (WLGKRPQSRGVAMNPVDHPHGGGEGKSSGGRHPVTPWGVPTKGYKTRVN) are disordered.

It belongs to the universal ribosomal protein uL2 family. Part of the 50S ribosomal subunit. Forms a bridge to the 30S subunit in the 70S ribosome.

In terms of biological role, one of the primary rRNA binding proteins. Required for association of the 30S and 50S subunits to form the 70S ribosome, for tRNA binding and peptide bond formation. It has been suggested to have peptidyltransferase activity; this is somewhat controversial. Makes several contacts with the 16S rRNA in the 70S ribosome. In Syntrophotalea carbinolica (strain DSM 2380 / NBRC 103641 / GraBd1) (Pelobacter carbinolicus), this protein is Large ribosomal subunit protein uL2.